A 329-amino-acid polypeptide reads, in one-letter code: Proline/serine-rich coiled-coil protein 1 (329 aa).

Ser22 bears the Phosphoserine mark. Copy 1 of the repeat occupies 38–41 (PEKP). Residues Ser47, Ser65, and Ser70 each carry the phosphoserine modification. 2 consecutive repeat copies span residues 68-71 (PLSP) and 103-106 (PGRP). The tract at residues 68–215 (PLSPEKLEEI…ARTVASPPIP (148 aa)) is 5 X 4 AA repeats of P-X-X-P. Residues 70-94 (SPEKLEEILDEANRLAAQLEECALK) are a coiled coil. The interval 94–329 (KDSENAAAGP…RKAAVPGPTR (236 aa)) is disordered. Residues 114–126 (PRRETFVLKDSPV) show a composition bias toward basic and acidic residues. Phosphoserine is present on Ser124. 2 stretches are compositionally biased toward polar residues: residues 132-148 (TVSS…TGLR) and 175-186 (PTCNLFSASKNP). Thr145 bears the Phosphothreonine mark. Ser189 is subject to Phosphoserine. Repeat copies occupy residues 194–197 (PTLP) and 212–215 (PPIP). Low complexity-rich tracts occupy residues 219–231 (APQS…QCSS) and 302–315 (GAAR…ARGR).

The protein belongs to the PSRC1 family. Interacts with APC2. Interacts with KIF2A. Interacts with ANKRD53; recruits ANKRD53 to the spindle during mitosis. Phosphorylated during mitosis.

It localises to the cytoplasm. It is found in the cytoskeleton. The protein localises to the spindle. Its subcellular location is the spindle pole. Its function is as follows. Required for normal progression through mitosis. Required for normal congress of chromosomes at the metaphase plate, and for normal rate of chromosomal segregation during anaphase. Plays a role in the regulation of mitotic spindle dynamics. Increases the rate of turnover of microtubules on metaphase spindles, and contributes to the generation of normal tension across sister kinetochores. Recruits KIF2A and ANKRD53 to the mitotic spindle and spindle poles. May participate in p53/TP53-regulated growth suppression. This is Proline/serine-rich coiled-coil protein 1 (Psrc1) from Rattus norvegicus (Rat).